The sequence spans 952 residues: Anion exchange protein 4 (952 aa).

The segment at 1 to 41 (MKLPGQGDFESSDAHENAHSEEPDSGLGPGPGLNGPSGIDI) is disordered. A compositionally biased stretch (basic and acidic residues) spans 12-22 (SDAHENAHSEE). The next 4 membrane-spanning stretches (helical) occupy residues 385–405 (AVFYIYLATVTNAITFGGLLG), 413–433 (GVLESFLGTAVAGAAFCLMAG), 470–490 (VGIWVTAFCLALVATEASLLV), and 501–521 (FCALISLIFIYDAMGKMLNLI). 2 N-linked (GlcNAc...) asparagine glycosylation sites follow: asparagine 546 and asparagine 569. The next 7 helical transmembrane spans lie at 593–613 (VPDIAFFSLLLFFTSFLCAIA), 634–654 (FSSVLAILLGCGLDTFLGLAT), 681–701 (PWWLSVAAALPALLLSILIFM), 727–747 (LFCVAVLMLFTSALGLPWYVS), 784–804 (GLVVFVLTGVSIFLAPVLKFI), 807–827 (PVLYGIFLYMGVAALSSIQFV), and 870–890 (VVKSTPAAIVFPLMLLGLVAI). The tract at residues 915–938 (ETIPENRSEPEHLFSGNDSEDSEL) is disordered. 3 N-linked (GlcNAc...) asparagine glycosylation sites follow: asparagine 920, asparagine 931, and asparagine 948.

The protein belongs to the anion exchanger (TC 2.A.31) family. In terms of tissue distribution, expressed in submandibular gland (SMG) duct and cortical collecting duct (CCD) of kidney. Lower expressed in duodenal villi.

Its subcellular location is the basolateral cell membrane. The catalysed reaction is 2 hydrogencarbonate(out) + chloride(in) + Na(+)(out) = 2 hydrogencarbonate(in) + chloride(out) + Na(+)(in). It carries out the reaction K(+)(in) + 2 hydrogencarbonate(in) + chloride(out) = K(+)(out) + 2 hydrogencarbonate(out) + chloride(in). It catalyses the reaction Li(+)(in) + 2 hydrogencarbonate(in) + chloride(out) = Li(+)(out) + 2 hydrogencarbonate(out) + chloride(in). The enzyme catalyses Rb(+)(in) + 2 hydrogencarbonate(in) + chloride(out) = Rb(+)(out) + 2 hydrogencarbonate(out) + chloride(in). The catalysed reaction is Cs(+)(in) + 2 hydrogencarbonate(in) + chloride(out) = Cs(+)(out) + 2 hydrogencarbonate(out) + chloride(in). Cl(-)/HCO3(-) exchanger activity is substantially increased in response to 5 uM isoproterenol. Cl(-)/HCO3(-) exchanger activity is increased by both forskolin and coexpression with the catalytic subunit alpha of PKA. Functionally, electroneutral Cl(-)/HCO3(-) antiporter that favors chloride ion entry and efflux of hydrogencarbonate and sodium ion across the basolateral membrane and may participate in salivary secretion. Also mediates Cl(-)/HCO3(-) exchange activity in the presence of K(+) as well as Cs(+), Li(+), and Rb(+). Does not contribute to Cl(-)/HCO3(-) exchanger in the apical membrane of the upper villous epithelium. This Mus musculus (Mouse) protein is Anion exchange protein 4.